We begin with the raw amino-acid sequence, 179 residues long: Large ribosomal subunit protein uL6 (179 aa).

It belongs to the universal ribosomal protein uL6 family. In terms of assembly, part of the 50S ribosomal subunit.

In terms of biological role, this protein binds to the 23S rRNA, and is important in its secondary structure. It is located near the subunit interface in the base of the L7/L12 stalk, and near the tRNA binding site of the peptidyltransferase center. In Gemmatimonas aurantiaca (strain DSM 14586 / JCM 11422 / NBRC 100505 / T-27), this protein is Large ribosomal subunit protein uL6.